The primary structure comprises 851 residues: METKKQKQNPLVNVKALSMLFKVRGSFFKALDEIDFTVNEGDFFGVIGESGSGKSTTGKCLIRLNIPSGGKVEIANHLISGKKLTRENDHWLKQNVQMVFQDPYSSLNPTKNVLTVISEPLVITKTVYGEVKEYLKTLAKLSFKTKKELLREDFELETQFYEKFFSKVLFHLETTINKFALLQESNNNSSAELAQTILGHTDDLIEALRQEFGLVYEFSSSQSEPLQKALKDKQETLAQDTIDKLKQELYTTQQKAKVSTQAFATWQKLQQTKQNLKAYRAQMAEELQNKPRIYLNAWLLTTKNYIKDSRQNTQLTDDVFAFSYNDMVDKKRRLVLVLSEYYKALPYFYDNWIHQNADRFDELTNAVFFDLIDVVIALNRDFANVESDAKAELIRFVQFIRRLCDLRFAALKKSFKKQTNYSFDFNRETELLYANSCYDIKELPQVIQPYWEKLFSDANYDKIAKSVQELNDIISTDIEKASNIASEINTKISSFKTEIAELKATFKTEKKAEDHSAQITGLKTQIAEIQTQIKQQKREVQSTEKAALKPVLKQYKSALHLYKRFKQLLRQFTKQLNLLVKKQQELEKIEEGLDLTIWERIQLLFYPVEGDLKSELKTRLKSFGVINFEYKRAVRESRVFRLVHFGHDVMKWGLFLPLTKIFMRNKVYEALDSVGLKREHAYRYPHEFSGGQRQRIAIARALITKPKLIIADELISALDVSIQAQVINILKDLAKKHNLTVLFIAHDLSMVQTVCNRLIIMHRGKIVERGSTDEIFAHPVHPYTRSLIKASPKLSKINIDLASFDEKFTYDSDYSLTNMPSFLKVPNTQEHELYCTQGQFDSWIKGASRIN.

In terms of domain architecture, ABC transporter spans 14–788; that stretch reads VKALSMLFKV…PVHPYTRSLI (775 aa). An ATP-binding site is contributed by 48–55; sequence GESGSGKS.

This sequence belongs to the ABC transporter superfamily. The complex is composed of two ATP-binding proteins (OppD and OppF), two transmembrane proteins (OppB and OppC) and a solute-binding protein (OppA).

It localises to the cell membrane. The enzyme catalyses a [peptide](out) + ATP + H2O = a [peptide](in) + ADP + phosphate + H(+). Functionally, part of the ABC transporter complex OppABCDF involved in the uptake of oligopeptides. Probably responsible for energy coupling to the transport system. The protein is Oligopeptide transport ATP-binding protein OppF (oppF) of Mycoplasma pneumoniae (strain ATCC 29342 / M129 / Subtype 1) (Mycoplasmoides pneumoniae).